The chain runs to 141 residues: Hemoglobin subunit alpha-D (141 aa).

The 141-residue stretch at 1-141 (MLNAEDKKLI…VSAVLAEKYR (141 aa)) folds into the Globin domain. Positions 58 and 87 each coordinate heme b.

Belongs to the globin family. As to quaternary structure, heterotetramer of two alpha-D chains and two beta chains. In terms of tissue distribution, red blood cells.

Its function is as follows. Involved in oxygen transport from the lung to the various peripheral tissues. This is Hemoglobin subunit alpha-D (HBAD) from Phasianus colchicus colchicus (Black-necked pheasant).